The following is a 151-amino-acid chain: MEKVESFELDHRKVKAPYIRKCCLLDGKCGDKVTKFDIRFLQPNKEEFGTAAMHGLEHLLAHELRAKLEGIIDLSPMGCRTGFYLSIWGDREASEIKEALEYSLEKVLEAKEIPAANDIQCGNYRDLSLFGAKEYAKEALERGFSLNIYGE.

Fe cation contacts are provided by H54, H58, and C121.

The protein belongs to the LuxS family. As to quaternary structure, homodimer. The cofactor is Fe cation.

It catalyses the reaction S-(5-deoxy-D-ribos-5-yl)-L-homocysteine = (S)-4,5-dihydroxypentane-2,3-dione + L-homocysteine. Functionally, involved in the synthesis of autoinducer 2 (AI-2) which is secreted by bacteria and is used to communicate both the cell density and the metabolic potential of the environment. The regulation of gene expression in response to changes in cell density is called quorum sensing. Catalyzes the transformation of S-ribosylhomocysteine (RHC) to homocysteine (HC) and 4,5-dihydroxy-2,3-pentadione (DPD). The sequence is that of S-ribosylhomocysteine lyase from Clostridium botulinum (strain Alaska E43 / Type E3).